The primary structure comprises 146 residues: Prepilin peptidase-dependent protein D (146 aa).

A propeptide spans 1–6 (MDKQRG) (leader sequence). Phe-7 carries the post-translational modification N-methylphenylalanine. A helical transmembrane segment spans residues 7–27 (FTLIELMVVIGIIAILSAIGI).

This sequence belongs to the N-Me-Phe pilin family.

The protein localises to the fimbrium. Its subcellular location is the membrane. Its function is as follows. Major component of the type IV pilus (T4P) that plays a role in cell adhesion and motility. Not produced when grown under standard laboratory conditions. The sequence is that of Prepilin peptidase-dependent protein D (ppdD) from Escherichia coli (strain K12).